A 359-amino-acid polypeptide reads, in one-letter code: Transcription factor MafA (359 aa).

A Phosphoserine modification is found at Ser14. Lys32 is covalently cross-linked (Glycyl lysine isopeptide (Lys-Gly) (interchain with G-Cter in SUMO2)). Disordered stretches follow at residues 40 to 105 (RFCH…VGGA) and 172 to 226 (GGGA…AGHH). The span at 46–73 (PPGSLSSTPLSTPCSSVPSSPSFCAPSP) shows a compositional bias: low complexity. Ser49 carries the post-translational modification Phosphoserine. Phosphothreonine is present on residues Thr53 and Thr57. Ser61 and Ser65 each carry phosphoserine. A compositionally biased stretch (gly residues) spans 74–84 (GTGGGAGGGGS). Residues 181-209 (GHHHGAHHTAHHHHSAHHHHHHHHHHGGS) are compositionally biased toward basic residues. Positions 210–224 (GHHGGGAGHGGGGAG) are enriched in gly residues. The segment at 260-285 (RLKQKRRTLKNRGYAQSCRFKRVQQR) is basic motif. One can recognise a bZIP domain in the interval 260–323 (RLKQKRRTLK…DLYKEKYEKL (64 aa)). The tract at residues 288-309 (LESEKCQLQSQVEQLKLEVGRL) is leucine-zipper. A disordered region spans residues 322-359 (KLAGRGGPGGAGGAGFPREPSPAQAGPGAAKGAPDFFL). Residues 325-336 (GRGGPGGAGGAG) show a composition bias toward gly residues. A compositionally biased stretch (low complexity) spans 343–359 (PAQAGPGAAKGAPDFFL).

It belongs to the bZIP family. Maf subfamily. As to quaternary structure, forms homodimers. Interacts with NEUROD1 and PDX1. May interact with MAFB, FOS, JUN and PCAF. Ubiquitinated, leading to its degradation by the proteasome. Post-translationally, phosphorylated at tyrosines. As to expression, expressed in brain, lung, spleen, pancreas and kidney. In the pancreas, expressed in the insulin-producing beta-cells of the islets of Langerhans (at protein level). Also expressed in the eye.

The protein localises to the nucleus. In terms of biological role, transcriptional factor that activates insulin gene expression. Acts synergistically with NEUROD1/BETA2 and PDX1. Binds the insulin enhancer C1/RIPE3b element. Binds to consensus TRE-type MARE 5'-TGCTGACTCAGCA-3' DNA sequence. The protein is Transcription factor MafA (Mafa) of Mus musculus (Mouse).